A 231-amino-acid polypeptide reads, in one-letter code: GFP-like fluorescent chromoprotein FP538 (231 aa).

Phenylalanine amide; atypical is present on Phe-65. The 2-tetrahydro-2-pyridyl-5-imidazolinone (Lys-Gly) cross-link spans 66–68; sequence KYG. Tyr-67 is modified (2,3-didehydrotyrosine).

It belongs to the GFP family. In terms of assembly, homotetramer. Contains a chromophore consisting of modified amino acid residues. The chromophore is formed by autocatalytic backbone condensation between Xaa-N and Gly-(N+2), and oxidation of Tyr-(N+1) to didehydrotyrosine. In addition, the residue N lysine undergoes cyclization. The alpha-amino nitrogen is replaced by the epsilon-amino nitrogen, the peptide chain is broken, residue N-1 is released as an amide, and a double bond is formed between the alpha-carbon and the nitrogen so that a tetrahydropyridine ring results. Maturation of the chromophore requires nothing other than molecular oxygen. As to expression, tentacle and oral disk.

In terms of biological role, pigment protein that is yellow in color. This chain is GFP-like fluorescent chromoprotein FP538, found in Zoanthus sp. (Green polyp).